Reading from the N-terminus, the 568-residue chain is Urease subunit alpha (568 aa).

Residues 131–568 (GGMDAHIHFI…LPLAQRYFLY (438 aa)) form the Urease domain. Residues histidine 136, histidine 138, and lysine 219 each coordinate Ni(2+). Lysine 219 bears the N6-carboxylysine mark. Residue histidine 221 participates in substrate binding. Ni(2+) contacts are provided by histidine 248 and histidine 274. Histidine 322 functions as the Proton donor in the catalytic mechanism. Aspartate 362 is a binding site for Ni(2+).

This sequence belongs to the metallo-dependent hydrolases superfamily. Urease alpha subunit family. Heterotrimer of UreA (gamma), UreB (beta) and UreC (alpha) subunits. Three heterotrimers associate to form the active enzyme. The cofactor is Ni cation. Carboxylation allows a single lysine to coordinate two nickel ions.

Its subcellular location is the cytoplasm. It catalyses the reaction urea + 2 H2O + H(+) = hydrogencarbonate + 2 NH4(+). It participates in nitrogen metabolism; urea degradation; CO(2) and NH(3) from urea (urease route): step 1/1. The polypeptide is Urease subunit alpha (Cereibacter sphaeroides (strain KD131 / KCTC 12085) (Rhodobacter sphaeroides)).